Here is a 284-residue protein sequence, read N- to C-terminus: Efem/EfeO family lipoprotein (284 aa).

Residues 1-17 (MKKLTTLLLASTLLIAA) form the signal peptide. C18 carries N-palmitoyl cysteine lipidation. The S-diacylglycerol cysteine moiety is linked to residue C18.

This sequence belongs to the EfeM/EfeO family.

The protein resides in the cell membrane. This is Efem/EfeO family lipoprotein from Staphylococcus aureus (strain NCTC 8325 / PS 47).